Here is a 4924-residue protein sequence, read N- to C-terminus: Hydroxamate-type ferrichrome siderophore peptide synthetase (4924 aa).

4 consecutive Carrier domains span residues 715 to 791 (NQSE…ILLK), 2172 to 2246 (DGFQ…KRRR), 3254 to 3328 (NVVE…NTQT), and 4402 to 4478 (IHLN…QYEK). Residues S752, S2206, S3288, and S4439 each carry the O-(pantetheine 4'-phosphoryl)serine modification.

This sequence belongs to the ATP-dependent AMP-binding enzyme family.

It is found in the cytoplasm. Functionally, involved in intracellular and extracellular ferrichrome siderophore biosynthesis. In Schizosaccharomyces pombe (strain 972 / ATCC 24843) (Fission yeast), this protein is Hydroxamate-type ferrichrome siderophore peptide synthetase (sib1).